The sequence spans 357 residues: UDP-arabinopyranose mutase 1 (357 aa).

N-acetylvaline is present on Val-2. Positions 110 to 112 (DDD) match the DXD motif motif. N-linked (Glc...) arginine glycosylation is present at Arg-158.

Belongs to the RGP family. Heteromers with RGP2, RGP3, RGP4 and RGP5. Mn(2+) serves as cofactor. It depends on Mg(2+) as a cofactor. In terms of processing, reversibly glycosylated in vitro by UDP-glucose, UDP-xylose and UDP-galactose, but not UDP-mannose. As to expression, predominantly expressed in shoot and root apical meristems. Expressed in epidermal cells of leaves, inflorescence stems and seed coat. Expressed in pollen.

The protein resides in the cytoplasm. Its subcellular location is the cytosol. It localises to the golgi apparatus. It catalyses the reaction UDP-beta-L-arabinofuranose = UDP-beta-L-arabinopyranose. Functionally, UDP-L-arabinose mutase involved in the biosynthesis of cell wall non-cellulosic polysaccharides. Catalyzes the interconvertion of UDP-L-arabinopyranose (UDP-Arap) and UDP-L-arabinofuranose (UDP-Araf) in vitro. Preferentially catalyzes the formation of UDP-Arap from UDP-Araf. At thermodynamic equilibrium in vitro the ratio of the pyranose form over the furanose form is 95:5. Is not active on other UDP-sugars (UDP-Gal, UDP-Xyl, UDP-Glc, GDP-Man and GDP-Fuc). Functions redundantly with RGP2 and is essential for proper cell walls and pollen development. Probably involved in the formation of the pectocellulosic cell wall layer intine. Is probably active as heteromer in vivo. This is UDP-arabinopyranose mutase 1 from Arabidopsis thaliana (Mouse-ear cress).